Reading from the N-terminus, the 343-residue chain is MKNILNFTLDELKDWMDKNSESKFRAKQIFQWIYKKAVFNFDDMSNISKSTKEKLKENFYIQIPNVVKKYVSNIDGTEKFLFEYEDGNIIESVVMKYKHGNSICVSTQIGCRMGCKFCASTVDGVVRNLTSGEIIAQVLKAQKEICDRISNVVLMGSGEPLDNYDNVIKFLKLINDEDALNIGQRHITLSTCGIVPKIKELADQKMQITLAISLHAPNNEIRKSMMPIANKYTLEELLDACRYYYRTTNRRITFEYALVKGVNDSRENAEELIKISKGMLCHINLIPVNEIKENNYERSKSKDIEEFKETLIKHGIETTIRREMGSDINGACGQLRRNYIRNN.

Residue Glu91 is the Proton acceptor of the active site. In terms of domain architecture, Radical SAM core spans 97 to 327; it reads YKHGNSICVS…TTIRREMGSD (231 aa). A disulfide bridge connects residues Cys104 and Cys332. Positions 111, 115, and 118 each coordinate [4Fe-4S] cluster. Residues 158-159, Ser190, 213-215, and Asn289 contribute to the S-adenosyl-L-methionine site; these read GE and SLH. Cys332 acts as the S-methylcysteine intermediate in catalysis.

It belongs to the radical SAM superfamily. RlmN family. The cofactor is [4Fe-4S] cluster.

It localises to the cytoplasm. It catalyses the reaction adenosine(2503) in 23S rRNA + 2 reduced [2Fe-2S]-[ferredoxin] + 2 S-adenosyl-L-methionine = 2-methyladenosine(2503) in 23S rRNA + 5'-deoxyadenosine + L-methionine + 2 oxidized [2Fe-2S]-[ferredoxin] + S-adenosyl-L-homocysteine. The enzyme catalyses adenosine(37) in tRNA + 2 reduced [2Fe-2S]-[ferredoxin] + 2 S-adenosyl-L-methionine = 2-methyladenosine(37) in tRNA + 5'-deoxyadenosine + L-methionine + 2 oxidized [2Fe-2S]-[ferredoxin] + S-adenosyl-L-homocysteine. In terms of biological role, specifically methylates position 2 of adenine 2503 in 23S rRNA and position 2 of adenine 37 in tRNAs. This Clostridium novyi (strain NT) protein is Probable dual-specificity RNA methyltransferase RlmN.